The following is a 297-amino-acid chain: Occlusion-derived virus envelope protein E27 (297 aa).

It belongs to the baculoviridae E27 family. As to quaternary structure, interacts with host mus209/PCNA, cdc2 and cdk6.

It is found in the virion membrane. Its function is as follows. Acts as a cyclin-like protein and plays a role in the modulation of host cell cycle. May promote G2/S arrest by interacting with host mus209/PCNA, cdc2 and cdk6. The cell cycle arrest is characterized by an intact nuclear envelope, concomitant with sustained activity of host cdc2. However, viral DNA replication still occurs in the arrested cells. This chain is Occlusion-derived virus envelope protein E27, found in Orgyia pseudotsugata multicapsid polyhedrosis virus (OpMNPV).